Reading from the N-terminus, the 187-residue chain is uncharacterized protein (187 aa).

G2 is lipidated: N-myristoyl glycine; by host.

This sequence belongs to the mimivirus L332/L333/L334 family.

This is an uncharacterized protein from Acanthamoeba polyphaga (Amoeba).